A 499-amino-acid polypeptide reads, in one-letter code: Interferon regulatory factor 5 (499 aa).

The short motif at 12–18 (PRRVRLK) is the Nuclear localization signal element. Residues 14–122 (RVRLKPWLVA…QPYKVYEVCS (109 aa)) constitute a DNA-binding region (IRF tryptophan pentad repeat). A disordered region spans residues 121–142 (CSNGPAPAESQPSEDNAEEEEE). Positions 145-155 (LQKMLPGLSIT) match the Nuclear export signal motif. Phosphoserine; by TBK1 is present on residues S153 and S294. S302 is subject to Phosphoserine. Glycyl lysine isopeptide (Lys-Gly) (interchain with G-Cter in ubiquitin) cross-links involve residues K412 and K413. Phosphoserine is present on residues S432, S436, S438, S441, and S447.

Belongs to the IRF family. Homodimer, when phosphorylated. Interacts with TASL (via pLxIS motif); interaction takes place downstream of TLR7, TLR8 or TLR9, leading to its activation. Interacts with MYD88 and TRAF6. Phosphorylation of serine and threonine residues by IKBKB in a C-terminal autoinhibitory region, stimulates dimerization, transport into the nucleus, assembly with the coactivator CBP/EP300 and initiation of transcription. Post-translationally, 'Lys-63'-linked polyubiquitination by TRAF6 is required for activation.

The protein resides in the cytoplasm. The protein localises to the nucleus. With respect to regulation, maintained as a monomer in an autoinhibited state. Phosphorylation and activation follow the following steps: innate adapter protein TASL recruits IRF5, thereby licensing IRF5 for phosphorylation by IKBKB. Phosphorylated IRF5 dissociates from the adapter proteins, dimerizes, and then enters the nucleus to induce IFNs. Its function is as follows. Transcription factor that plays a critical role in innate immunity by activating expression of type I interferon (IFN) IFNA and INFB and inflammatory cytokines downstream of endolysosomal toll-like receptors TLR7, TLR8 and TLR9. Regulates the transcription of type I IFN genes (IFN-alpha and IFN-beta) and IFN-stimulated genes (ISG) by binding to an interferon-stimulated response element (ISRE) in their promoters. Can efficiently activate both the IFN-beta (IFNB) and the IFN-alpha (IFNA) genes and mediate their induction downstream of the TLR-activated, MyD88-dependent pathway. The protein is Interferon regulatory factor 5 of Bos taurus (Bovine).